The sequence spans 962 residues: Protease 3 (962 aa).

The signal sequence occupies residues 1 to 23; the sequence is MPRSTWFKALLLLVALWGPAVQA. H88 contributes to the Zn(2+) binding site. Residue E91 is the Proton acceptor of the active site. The Zn(2+) site is built by H92 and E169.

It belongs to the peptidase M16 family. In terms of assembly, monomer. Zn(2+) serves as cofactor.

It localises to the periplasm. It catalyses the reaction Preferential cleavage of 16-Tyr-|-Leu-17 and 25-Phe-|-Tyr-26 bonds of oxidized insulin B chain. Also acts on other substrates of Mw less than 7 kDa such as insulin and glucagon.. Endopeptidase that degrades small peptides of less than 7 kDa, such as glucagon and insulin. The sequence is that of Protease 3 (ptrA) from Salmonella typhi.